The chain runs to 54 residues: Large ribosomal subunit protein bL32 (54 aa).

The interval methionine 1–histidine 26 is disordered. Positions lysine 7–arginine 16 are enriched in basic residues.

Belongs to the bacterial ribosomal protein bL32 family.

This chain is Large ribosomal subunit protein bL32, found in Buchnera aphidicola subsp. Acyrthosiphon pisum (strain 5A).